The following is a 75-amino-acid chain: UPF0270 protein PputGB1_1339 (75 aa).

Belongs to the UPF0270 family.

The protein is UPF0270 protein PputGB1_1339 of Pseudomonas putida (strain GB-1).